The primary structure comprises 395 residues: Yellow-related salivary protein M35 (395 aa).

Residues 1-18 form the signal peptide; the sequence is MKLILTVLAFLSLQVALS.

Belongs to the major royal jelly protein family. As to expression, salivary gland (at protein level).

The protein localises to the secreted. Functionally, probably modulates blood feeding of sand flies on vertebrate species by binding and sequestering different mediators involved in the host response. Functions as a chemoattractant for host neutrophils; likely acts through a G-protein-coupled receptor and effect is dependent on calcium influx and phosphatidylinositol 3-kinases (PI3K) activity. Its function is as follows. (Microbial infection) Probably enhances infection caused by Leishmania species in the host through augmentation of host neutrophil recruitment into the skin. This Phlebotomus duboscqi (Sandfly) protein is Yellow-related salivary protein M35.